Reading from the N-terminus, the 584-residue chain is ATP-dependent lipid A-core flippase (584 aa).

The next 5 helical transmembrane spans lie at 15-35 (LLGY…SMAV), 63-83 (IMWV…AGFI), 153-173 (LGML…CLVV), 251-271 (TGVT…FAGL), and 277-297 (GLTA…FAPV). Positions 27–309 (LLSMLSMAVA…ISSVSQAMQR (283 aa)) constitute an ABC transmembrane type-1 domain. Residues 341–576 (LSFDAVSFAY…GGLYARLHSL (236 aa)) form the ABC transporter domain. 375-382 (GSSGSGKT) lines the ATP pocket.

It belongs to the ABC transporter superfamily. Lipid exporter (TC 3.A.1.106) family. Homodimer.

It localises to the cell inner membrane. It carries out the reaction ATP + H2O + lipid A-core oligosaccharideSide 1 = ADP + phosphate + lipid A-core oligosaccharideSide 2.. In terms of biological role, involved in lipopolysaccharide (LPS) biosynthesis. Translocates lipid A-core from the inner to the outer leaflet of the inner membrane. Transmembrane domains (TMD) form a pore in the inner membrane and the ATP-binding domain (NBD) is responsible for energy generation. The polypeptide is ATP-dependent lipid A-core flippase (Chromobacterium violaceum (strain ATCC 12472 / DSM 30191 / JCM 1249 / CCUG 213 / NBRC 12614 / NCIMB 9131 / NCTC 9757 / MK)).